Here is a 273-residue protein sequence, read N- to C-terminus: 2,3,4,5-tetrahydropyridine-2,6-dicarboxylate N-succinyltransferase (273 aa).

Positions 104 and 141 each coordinate substrate.

The protein belongs to the transferase hexapeptide repeat family. In terms of assembly, homotrimer.

Its subcellular location is the cytoplasm. It carries out the reaction (S)-2,3,4,5-tetrahydrodipicolinate + succinyl-CoA + H2O = (S)-2-succinylamino-6-oxoheptanedioate + CoA. It participates in amino-acid biosynthesis; L-lysine biosynthesis via DAP pathway; LL-2,6-diaminopimelate from (S)-tetrahydrodipicolinate (succinylase route): step 1/3. The sequence is that of 2,3,4,5-tetrahydropyridine-2,6-dicarboxylate N-succinyltransferase from Chromobacterium violaceum (strain ATCC 12472 / DSM 30191 / JCM 1249 / CCUG 213 / NBRC 12614 / NCIMB 9131 / NCTC 9757 / MK).